The primary structure comprises 344 residues: MKFLDQAKVYVRSGDGGAGCVSFRREKFIEFGGPDGGDGGRGGDVWIECVDGLNTLIDYRYQQHFKAKKGDHGKGANRTGARGSDVVLRVPAGTQILDETEETVLADLTEVGQRIKLLEGGNGGFGNAQFKTSTNQAPRRANPGLEGQERWIWLRLKLIADAGLVGLPNAGKSTFLAATTAAKPKIADYPFTTLHPGLGVVRVDGREFVLADIPGLIEGAHEGVGIGDRFLGHVERCRALLHLVDGTSEHAGKAYKTVRAELAAYGNGLDEKPEIVALSKVDALSPELLKQQKERLKRAAKKTPLLLSAQSGQGVQEALRLLLSVVEEERGAEKAEEPRDAWRP.

In terms of domain architecture, Obg spans 1–159 (MKFLDQAKVY…RWIWLRLKLI (159 aa)). Residues 160–327 (ADAGLVGLPN…ALRLLLSVVE (168 aa)) enclose the OBG-type G domain. GTP contacts are provided by residues 166 to 173 (GLPNAGKS), 191 to 195 (FTTLH), 212 to 215 (DIPG), 279 to 282 (SKVD), and 308 to 310 (SAQ). Positions 173 and 193 each coordinate Mg(2+).

Belongs to the TRAFAC class OBG-HflX-like GTPase superfamily. OBG GTPase family. In terms of assembly, monomer. The cofactor is Mg(2+).

The protein localises to the cytoplasm. An essential GTPase which binds GTP, GDP and possibly (p)ppGpp with moderate affinity, with high nucleotide exchange rates and a fairly low GTP hydrolysis rate. Plays a role in control of the cell cycle, stress response, ribosome biogenesis and in those bacteria that undergo differentiation, in morphogenesis control. In Xanthobacter autotrophicus (strain ATCC BAA-1158 / Py2), this protein is GTPase Obg.